The primary structure comprises 398 residues: DNA replication and repair protein RecF (398 aa).

Position 30 to 37 (30 to 37 (GSNGLGKT)) interacts with ATP.

It belongs to the RecF family.

Its subcellular location is the cytoplasm. Functionally, the RecF protein is involved in DNA metabolism; it is required for DNA replication and normal SOS inducibility. RecF binds preferentially to single-stranded, linear DNA. It also seems to bind ATP. In Renibacterium salmoninarum (strain ATCC 33209 / DSM 20767 / JCM 11484 / NBRC 15589 / NCIMB 2235), this protein is DNA replication and repair protein RecF.